We begin with the raw amino-acid sequence, 617 residues long: Dihydroxy-acid dehydratase (617 aa).

Residue aspartate 82 participates in Mg(2+) binding. Cysteine 123 lines the [2Fe-2S] cluster pocket. Mg(2+)-binding residues include aspartate 124 and lysine 125. Residue lysine 125 is modified to N6-carboxylysine. A [2Fe-2S] cluster-binding site is contributed by cysteine 197. Glutamate 497 is a binding site for Mg(2+). Catalysis depends on serine 523, which acts as the Proton acceptor.

The protein belongs to the IlvD/Edd family. Homodimer. The cofactor is [2Fe-2S] cluster. Mg(2+) serves as cofactor.

The enzyme catalyses (2R)-2,3-dihydroxy-3-methylbutanoate = 3-methyl-2-oxobutanoate + H2O. It catalyses the reaction (2R,3R)-2,3-dihydroxy-3-methylpentanoate = (S)-3-methyl-2-oxopentanoate + H2O. It participates in amino-acid biosynthesis; L-isoleucine biosynthesis; L-isoleucine from 2-oxobutanoate: step 3/4. It functions in the pathway amino-acid biosynthesis; L-valine biosynthesis; L-valine from pyruvate: step 3/4. Its function is as follows. Functions in the biosynthesis of branched-chain amino acids. Catalyzes the dehydration of (2R,3R)-2,3-dihydroxy-3-methylpentanoate (2,3-dihydroxy-3-methylvalerate) into 2-oxo-3-methylpentanoate (2-oxo-3-methylvalerate) and of (2R)-2,3-dihydroxy-3-methylbutanoate (2,3-dihydroxyisovalerate) into 2-oxo-3-methylbutanoate (2-oxoisovalerate), the penultimate precursor to L-isoleucine and L-valine, respectively. The sequence is that of Dihydroxy-acid dehydratase from Streptomyces coelicolor (strain ATCC BAA-471 / A3(2) / M145).